We begin with the raw amino-acid sequence, 247 residues long: tRNA (guanine-N(1)-)-methyltransferase (247 aa).

Residues G115 and 134-139 (IGDFVL) each bind S-adenosyl-L-methionine.

The protein belongs to the RNA methyltransferase TrmD family. As to quaternary structure, homodimer.

It localises to the cytoplasm. The catalysed reaction is guanosine(37) in tRNA + S-adenosyl-L-methionine = N(1)-methylguanosine(37) in tRNA + S-adenosyl-L-homocysteine + H(+). Functionally, specifically methylates guanosine-37 in various tRNAs. This Anaeromyxobacter sp. (strain K) protein is tRNA (guanine-N(1)-)-methyltransferase.